We begin with the raw amino-acid sequence, 201 residues long: Imidazole glycerol phosphate synthase subunit HisH (201 aa).

The Glutamine amidotransferase type-1 domain occupies methionine 1–arginine 201. Cysteine 79 functions as the Nucleophile in the catalytic mechanism. Residues histidine 181 and glutamate 183 contribute to the active site.

As to quaternary structure, heterodimer of HisH and HisF.

The protein resides in the cytoplasm. The enzyme catalyses 5-[(5-phospho-1-deoxy-D-ribulos-1-ylimino)methylamino]-1-(5-phospho-beta-D-ribosyl)imidazole-4-carboxamide + L-glutamine = D-erythro-1-(imidazol-4-yl)glycerol 3-phosphate + 5-amino-1-(5-phospho-beta-D-ribosyl)imidazole-4-carboxamide + L-glutamate + H(+). The catalysed reaction is L-glutamine + H2O = L-glutamate + NH4(+). It participates in amino-acid biosynthesis; L-histidine biosynthesis; L-histidine from 5-phospho-alpha-D-ribose 1-diphosphate: step 5/9. Its function is as follows. IGPS catalyzes the conversion of PRFAR and glutamine to IGP, AICAR and glutamate. The HisH subunit catalyzes the hydrolysis of glutamine to glutamate and ammonia as part of the synthesis of IGP and AICAR. The resulting ammonia molecule is channeled to the active site of HisF. This is Imidazole glycerol phosphate synthase subunit HisH from Oceanobacillus iheyensis (strain DSM 14371 / CIP 107618 / JCM 11309 / KCTC 3954 / HTE831).